Consider the following 96-residue polypeptide: Elicitor peptide 3 (96 aa).

The propeptide occupies 1–73 (MENLRNGEDN…EEEEEDGMTI (73 aa)). The tract at residues 32–96 (SGLESSSSSS…PSSGKGGKHN (65 aa)) is disordered. Residues 35–49 (ESSSSSSSSCDLSSS) are compositionally biased toward low complexity. Over residues 52 to 71 (EEDESIDIKEEEEEEEEDGM) the composition is skewed to acidic residues.

Belongs to the brassicaceae elicitor peptide family.

Functionally, elicitor of plant defense. The polypeptide is Elicitor peptide 3 (PEP3) (Arabidopsis thaliana (Mouse-ear cress)).